Reading from the N-terminus, the 165-residue chain is Ribosomal RNA large subunit methyltransferase H (165 aa).

Glycine 109 serves as a coordination point for S-adenosyl-L-methionine.

Belongs to the RNA methyltransferase RlmH family. In terms of assembly, homodimer.

Its subcellular location is the cytoplasm. It catalyses the reaction pseudouridine(1915) in 23S rRNA + S-adenosyl-L-methionine = N(3)-methylpseudouridine(1915) in 23S rRNA + S-adenosyl-L-homocysteine + H(+). Functionally, specifically methylates the pseudouridine at position 1915 (m3Psi1915) in 23S rRNA. The protein is Ribosomal RNA large subunit methyltransferase H of Methylorubrum populi (strain ATCC BAA-705 / NCIMB 13946 / BJ001) (Methylobacterium populi).